The primary structure comprises 88 residues: Small ribosomal subunit protein uS17 (88 aa).

The protein belongs to the universal ribosomal protein uS17 family. Part of the 30S ribosomal subunit.

One of the primary rRNA binding proteins, it binds specifically to the 5'-end of 16S ribosomal RNA. The sequence is that of Small ribosomal subunit protein uS17 from Leuconostoc mesenteroides subsp. mesenteroides (strain ATCC 8293 / DSM 20343 / BCRC 11652 / CCM 1803 / JCM 6124 / NCDO 523 / NBRC 100496 / NCIMB 8023 / NCTC 12954 / NRRL B-1118 / 37Y).